The chain runs to 371 residues: Regulatory protein RapK (371 aa).

6 TPR repeats span residues 7–42 (EVVA…FDEM), 93–130 (EYNF…IPDE), 175–208 (ATST…AKET), 215–248 (AQLF…ESWL), 254–290 (INSL…MENK), and 331–364 (DELS…EQKM).

It belongs to the Rap family.

Its subcellular location is the cytoplasm. With respect to regulation, inhibited by PhrK, which prevents RapK-ComA interaction. Its function is as follows. Involved in the regulation of genetic competence development. Inhibits the activity of ComA, a transcriptional factor that regulates the development of genetic competence. Likely affects the activity of additional regulators, in particular Spo0A. The chain is Regulatory protein RapK (rapK) from Bacillus subtilis (strain 168).